The following is a 442-amino-acid chain: Large ribosomal subunit protein mL65 (442 aa).

This sequence belongs to the mitochondrion-specific ribosomal protein mL65 family. Component of the mitochondrial ribosome small subunit (28S) which comprises a 12S rRNA and about 30 distinct proteins.

The protein resides in the mitochondrion. The chain is Large ribosomal subunit protein mL65 (Mrps30) from Mus musculus (Mouse).